A 286-amino-acid chain; its full sequence is ATP phosphoribosyltransferase (286 aa).

It belongs to the ATP phosphoribosyltransferase family. Long subfamily. Requires Mg(2+) as cofactor.

It localises to the cytoplasm. It carries out the reaction 1-(5-phospho-beta-D-ribosyl)-ATP + diphosphate = 5-phospho-alpha-D-ribose 1-diphosphate + ATP. It participates in amino-acid biosynthesis; L-histidine biosynthesis; L-histidine from 5-phospho-alpha-D-ribose 1-diphosphate: step 1/9. Feedback inhibited by histidine. Functionally, catalyzes the condensation of ATP and 5-phosphoribose 1-diphosphate to form N'-(5'-phosphoribosyl)-ATP (PR-ATP). Has a crucial role in the pathway because the rate of histidine biosynthesis seems to be controlled primarily by regulation of HisG enzymatic activity. The protein is ATP phosphoribosyltransferase of Arthrobacter sp. (strain FB24).